Here is a 175-residue protein sequence, read N- to C-terminus: Peptide deformylase (175 aa).

Positions 98 and 140 each coordinate Fe cation. E141 is an active-site residue. H144 is a binding site for Fe cation.

It belongs to the polypeptide deformylase family. It depends on Fe(2+) as a cofactor.

It catalyses the reaction N-terminal N-formyl-L-methionyl-[peptide] + H2O = N-terminal L-methionyl-[peptide] + formate. In terms of biological role, removes the formyl group from the N-terminal Met of newly synthesized proteins. Requires at least a dipeptide for an efficient rate of reaction. N-terminal L-methionine is a prerequisite for activity but the enzyme has broad specificity at other positions. The sequence is that of Peptide deformylase from Bradyrhizobium sp. (strain BTAi1 / ATCC BAA-1182).